Consider the following 228-residue polypeptide: Endo-1,4-beta-xylanase A (228 aa).

A signal peptide spans 1–27 (MNLRKLRLLFVMCIGLTLILTAVPAHA). Positions 29-222 (TITNNEMGNH…SSGSANVMTN (194 aa)) constitute a GH11 domain. The active-site Nucleophile is Glu-120. Glu-209 acts as the Proton donor in catalysis.

It belongs to the glycosyl hydrolase 11 (cellulase G) family.

The enzyme catalyses Endohydrolysis of (1-&gt;4)-beta-D-xylosidic linkages in xylans.. Its pathway is glycan degradation; xylan degradation. This chain is Endo-1,4-beta-xylanase A (xynA), found in Bacillus pumilus (Bacillus mesentericus).